The primary structure comprises 140 residues: PDZ domain-containing protein 11 (140 aa).

Residues 47–129 (IVTLKKPPGA…ISMRVRFFPY (83 aa)) enclose the PDZ domain.

As to quaternary structure, interacts with ATP2B1, ATP2B2, ATP2B3, ATP2B4 and ATP7A. Interacts with PLEKHA7 (via WW domains) at zonula adherens; this interaction is essential for the interaction between PLEKHA7 and the ADAM10-binding protein TSPAN33. Interacts with SLC5A6.

It is found in the cytoplasm. Its subcellular location is the cell junction. The protein localises to the adherens junction. The protein resides in the cell membrane. Functionally, mediates docking of ADAM10 to zonula adherens by interacting with PLEKHA7 which is required for PLEKHA7 to interact with the ADAM10-binding protein TSPAN33. The chain is PDZ domain-containing protein 11 (Pdzd11) from Mus musculus (Mouse).